The primary structure comprises 348 residues: D-alanine--D-alanine ligase (348 aa).

In terms of domain architecture, ATP-grasp spans Lys-132–Met-334. Leu-162–Glu-217 lines the ATP pocket. 3 residues coordinate Mg(2+): Asp-288, Glu-301, and Asn-303.

This sequence belongs to the D-alanine--D-alanine ligase family. The cofactor is Mg(2+). Mn(2+) serves as cofactor.

The protein localises to the cytoplasm. It catalyses the reaction 2 D-alanine + ATP = D-alanyl-D-alanine + ADP + phosphate + H(+). It participates in cell wall biogenesis; peptidoglycan biosynthesis. Functionally, cell wall formation. The sequence is that of D-alanine--D-alanine ligase from Streptococcus agalactiae serotype Ia (strain ATCC 27591 / A909 / CDC SS700).